The sequence spans 279 residues: B3 domain-containing protein Os05g0481400 (279 aa).

The disordered stretch occupies residues 45–68 (ARLQKSTRASPKPRKKFEVGATEV). The TF-B3 DNA-binding region spans 139-230 (FVKTMVRSHV…RFKIYIIKAV (92 aa)). Acidic residues-rich tracts occupy residues 233-244 (DANESEPADEEA) and 252-262 (TEDAAEQDDSP). The disordered stretch occupies residues 233-279 (DANESEPADEEAIGDKDTSTEDAAEQDDSPNAEPLKGTKRRKLRGRR). The segment covering 269–279 (GTKRRKLRGRR) has biased composition (basic residues).

The protein resides in the nucleus. This chain is B3 domain-containing protein Os05g0481400, found in Oryza sativa subsp. japonica (Rice).